The primary structure comprises 435 residues: Maltodextrin transport system permease protein MdxF (435 aa).

The next 8 helical transmembrane spans lie at 35 to 55 (LLFLAITGLFAFELCVFGIQA), 73 to 93 (FMLIEGTLQLIVTMIFLMFYI), 136 to 156 (AYIMMVFVIIFPVLVTLFVAL), 199 to 219 (VIWTICATTLQIILGIVTALF), 234 to 254 (IFLFPWAVPAFITIMSFSNMF), 293 to 313 (LIMIQTWLGFPYIYVMVTGVL), 337 to 357 (HITFPMILFATAPVMITQYTF), and 403 to 423 (VAAAVTLLISFIVIGISLIAF). Positions 195–422 (LGWTVIWTIC…FIVIGISLIA (228 aa)) constitute an ABC transmembrane type-1 domain.

It belongs to the binding-protein-dependent transport system permease family. MalFG subfamily. As to quaternary structure, the complex is composed of two ATP-binding proteins (MsmX), two transmembrane proteins (MdxF and MdxG) and a solute-binding protein (MdxE).

It is found in the cell membrane. In terms of biological role, part of the ABC transporter complex involved in maltodextrin import. Probably responsible for the translocation of the substrate across the membrane. The sequence is that of Maltodextrin transport system permease protein MdxF (mdxF) from Bacillus subtilis (strain 168).